The primary structure comprises 310 residues: Acetaldehyde dehydrogenase 1 (310 aa).

12 to 15 (SGNI) is a binding site for NAD(+). The active-site Acyl-thioester intermediate is the Cys-132. NAD(+) contacts are provided by residues 163 to 171 (SAGPGTRAN) and Asn-287.

The protein belongs to the acetaldehyde dehydrogenase family.

It carries out the reaction acetaldehyde + NAD(+) + CoA = acetyl-CoA + NADH + H(+). This Pseudomonas putida (strain W619) protein is Acetaldehyde dehydrogenase 1.